We begin with the raw amino-acid sequence, 537 residues long: Apolipoprotein N-acyltransferase (537 aa).

Transmembrane regions (helical) follow at residues 10–30 (IALAIILTWGWKRALVAITAG), 37–57 (LAPFNLFPVLFITFPVLVWLI), 76–96 (YWFGLGYFVPGLYWIGYAFFV), 107–127 (FAVLGLPAYLSIFTAIGFALA), 181–201 (IGLWGMTFLTVAIFASPATLI), and 210–230 (AWRAPAAAVALLIAMSIFGAI). A CN hydrolase domain is found at 248 to 501 (MQPNLQQDAK…EGILDASLPA (254 aa)). Glu295 acts as the Proton acceptor in catalysis. Residue Lys360 is part of the active site. Cys413 functions as the Nucleophile in the catalytic mechanism. The chain crosses the membrane as a helical span at residues 507–527 (IYARVGDVPAAVLVALAVLLA).

Belongs to the CN hydrolase family. Apolipoprotein N-acyltransferase subfamily.

It localises to the cell inner membrane. It catalyses the reaction N-terminal S-1,2-diacyl-sn-glyceryl-L-cysteinyl-[lipoprotein] + a glycerophospholipid = N-acyl-S-1,2-diacyl-sn-glyceryl-L-cysteinyl-[lipoprotein] + a 2-acyl-sn-glycero-3-phospholipid + H(+). It participates in protein modification; lipoprotein biosynthesis (N-acyl transfer). Its function is as follows. Catalyzes the phospholipid dependent N-acylation of the N-terminal cysteine of apolipoprotein, the last step in lipoprotein maturation. In Bradyrhizobium diazoefficiens (strain JCM 10833 / BCRC 13528 / IAM 13628 / NBRC 14792 / USDA 110), this protein is Apolipoprotein N-acyltransferase.